A 286-amino-acid polypeptide reads, in one-letter code: Pheromone receptor transcription factor (286 aa).

An N-acetylserine modification is found at S2. A Phosphoserine modification is found at S2. Residues 18–72 (RRKIEIKFIENKTRRHVTFSKRKHGIMKKAFELSVLTGTQVLLLVVSETGLVYTF) form the MADS-box domain. Positions 97–119 (PDDEEEDEEEDGDDDDDDDDDGN) are enriched in acidic residues. The tract at residues 97–137 (PDDEEEDEEEDGDDDDDDDDDGNDMQRQQPQQQQPQQQQQV) is disordered. Low complexity predominate over residues 122-136 (QRQQPQQQQPQQQQQ). At S144 the chain carries Phosphoserine. The interval 167–264 (LGGANPNQNS…QQAFANAASP (98 aa)) is disordered. The segment covering 171-246 (NPNQNSMIQQ…QQQQQQQQQP (76 aa)) has biased composition (low complexity).

In terms of assembly, homodimer. Binds DNA with a high specificity in complex with mating-type protein ALPHA1. Also binds DNA with a high specificity as a heterotetramer consisting of an ALPHA2 dimer and an MCM1 dimer. Interacts with YHP1 and YOX1, possibly leading to its inactivation. Interacts with ARG80 and ARG82.

It is found in the nucleus. Its function is as follows. Transcription factor required for the efficient replication of minichromosomes and the transcriptional regulation of early cell cycle genes. Activates transcription of ECB-dependent genes during the G1/M phase. Genes that contain a ECB (early cell box) element in their transcription regulatory region are transcribed only during G1/M phases. Interacts with the alpha-2 repressor or with the alpha-1 activator thereby regulating the expression of mating-type-specific genes. With ARG80, ARG81 and ARG82, coordinates the expression of arginine anabolic and catabolic genes in response to arginine. This Saccharomyces cerevisiae (strain ATCC 204508 / S288c) (Baker's yeast) protein is Pheromone receptor transcription factor (MCM1).